We begin with the raw amino-acid sequence, 274 residues long: Endonuclease 8-like L720 (274 aa).

Residues 241–274 form an FPG-type; degenerate zinc finger; sequence RIYRKSLCPLGHKTIRKKIGLRNRMTTWCPVCQL.

The protein belongs to the FPG family.

The polypeptide is Endonuclease 8-like L720 (Acanthamoeba polyphaga mimivirus (APMV)).